We begin with the raw amino-acid sequence, 179 residues long: Large ribosomal subunit protein uL6 (179 aa).

The protein belongs to the universal ribosomal protein uL6 family. As to quaternary structure, part of the 50S ribosomal subunit.

This protein binds to the 23S rRNA, and is important in its secondary structure. It is located near the subunit interface in the base of the L7/L12 stalk, and near the tRNA binding site of the peptidyltransferase center. This Treponema pallidum (strain Nichols) protein is Large ribosomal subunit protein uL6.